We begin with the raw amino-acid sequence, 207 residues long: MAQGTLYIVSAPSGAGKSSLIQALLKTQPLYDTQVSVSHTTRQPRPGEVHGEHYFFVNHDEFKEMISRDAFLEHAEVFGNYYGTSREAIEQVLATGVDVFLDIDWQGAQQIRQKMPHARSIFILPPSKIELDRRLRGRDQDSEEVIAKRMAQAVAEMSHYAEYDYLIVNDDFDTALTDLKTIIRAERLRMSRQKQRHDALISKLLAD.

Residues 4–184 (GTLYIVSAPS…ALTDLKTIIR (181 aa)) form the Guanylate kinase-like domain. 11 to 18 (APSGAGKS) lines the ATP pocket.

It belongs to the guanylate kinase family.

The protein localises to the cytoplasm. The catalysed reaction is GMP + ATP = GDP + ADP. Functionally, essential for recycling GMP and indirectly, cGMP. In Escherichia coli O157:H7, this protein is Guanylate kinase.